A 213-amino-acid polypeptide reads, in one-letter code: Cytokinin riboside 5'-monophosphate phosphoribohydrolase LOG1 (213 aa).

Substrate is bound by residues Glu78, 96 to 97, 113 to 119, and Thr125; these read RK and GYGTLEE.

Belongs to the LOG family. In terms of tissue distribution, expressed in roots and shoots. Detected in the vascular tissues of roots, cotyledons, leaves and pistils, in the shoot apical meristem and in immature flowers.

The protein resides in the cytoplasm. Its subcellular location is the nucleus. The enzyme catalyses N(6)-(dimethylallyl)adenosine 5'-phosphate + H2O = N(6)-dimethylallyladenine + D-ribose 5-phosphate. It carries out the reaction 9-ribosyl-trans-zeatin 5'-phosphate + H2O = trans-zeatin + D-ribose 5-phosphate. In terms of biological role, cytokinin-activating enzyme working in the direct activation pathway. Phosphoribohydrolase that converts inactive cytokinin nucleotides to the biologically active free-base forms. The chain is Cytokinin riboside 5'-monophosphate phosphoribohydrolase LOG1 (LOG1) from Arabidopsis thaliana (Mouse-ear cress).